A 200-amino-acid chain; its full sequence is Glycerol-3-phosphate acyltransferase (200 aa).

Transmembrane regions (helical) follow at residues 4 to 24 (FALCYMFAAYLLGSISSAVIV), 53 to 73 (WAALAVFVFDVLKGMIPVWCG), 80 to 100 (QFELGMVALGACLGHIFPIFF), 115 to 135 (IAPIGWGVMATMLGTWVLVFV), and 138 to 158 (GYSSLSAVISALLVPLYVWWF).

It belongs to the PlsY family. In terms of assembly, probably interacts with PlsX.

The protein localises to the cell inner membrane. The enzyme catalyses an acyl phosphate + sn-glycerol 3-phosphate = a 1-acyl-sn-glycero-3-phosphate + phosphate. It functions in the pathway lipid metabolism; phospholipid metabolism. Catalyzes the transfer of an acyl group from acyl-phosphate (acyl-PO(4)) to glycerol-3-phosphate (G3P) to form lysophosphatidic acid (LPA). This enzyme utilizes acyl-phosphate as fatty acyl donor, but not acyl-CoA or acyl-ACP. The chain is Glycerol-3-phosphate acyltransferase from Actinobacillus succinogenes (strain ATCC 55618 / DSM 22257 / CCUG 43843 / 130Z).